The chain runs to 198 residues: IMP cyclohydrolase (198 aa).

This sequence belongs to the archaeal IMP cyclohydrolase family.

The catalysed reaction is IMP + H2O = 5-formamido-1-(5-phospho-D-ribosyl)imidazole-4-carboxamide. The protein operates within purine metabolism; IMP biosynthesis via de novo pathway; IMP from 5-formamido-1-(5-phospho-D-ribosyl)imidazole-4-carboxamide: step 1/1. Catalyzes the cyclization of 5-formylamidoimidazole-4-carboxamide ribonucleotide to IMP. This is IMP cyclohydrolase from Thermococcus kodakarensis (strain ATCC BAA-918 / JCM 12380 / KOD1) (Pyrococcus kodakaraensis (strain KOD1)).